The sequence spans 292 residues: Elongation factor Ts (292 aa).

Residues 79 to 82 (TDFV) are involved in Mg(2+) ion dislocation from EF-Tu.

The protein belongs to the EF-Ts family.

The protein localises to the cytoplasm. Its function is as follows. Associates with the EF-Tu.GDP complex and induces the exchange of GDP to GTP. It remains bound to the aminoacyl-tRNA.EF-Tu.GTP complex up to the GTP hydrolysis stage on the ribosome. The chain is Elongation factor Ts from Xylella fastidiosa (strain 9a5c).